Reading from the N-terminus, the 305-residue chain is MSSRYTPSEMAQALGAGLLSFPVTHFDADMAFDEPAYRSNLDWLSSHPAAGLFAAGGTGELFSLTLDEVDRAVRAAVTQTAGRMPVIAPAGYGTAIAVAMAQAAERNDADGILLFPPYLTECDADGVAEHVERVCKATSLGVIVYGRANARLDDVALARVAERCPNLMGYKDGIGDVDRMTRIYARLGDRLLYVGGLPTAETFALPYLEMGVTTYSSAIFNFLPEWALSFYAAVRARDHATIYRELNDFVLPYTVLRNRRAGYAVSIVKAGMRAVGRPAGPVRTPLADLTEDEFAQPTQLIGGRR.

This sequence belongs to the DapA family.

The enzyme catalyses 5-dehydro-4-deoxy-D-glucarate + H(+) = 2,5-dioxopentanoate + CO2 + H2O. It participates in carbohydrate acid metabolism; D-glucarate degradation; 2,5-dioxopentanoate from D-glucarate: step 2/2. This Xanthomonas campestris pv. campestris (strain 8004) protein is Probable 5-dehydro-4-deoxyglucarate dehydratase.